The following is a 117-amino-acid chain: Large ribosomal subunit protein uL18 (117 aa).

This sequence belongs to the universal ribosomal protein uL18 family. Part of the 50S ribosomal subunit; part of the 5S rRNA/L5/L18/L25 subcomplex. Contacts the 5S and 23S rRNAs.

Functionally, this is one of the proteins that bind and probably mediate the attachment of the 5S RNA into the large ribosomal subunit, where it forms part of the central protuberance. The sequence is that of Large ribosomal subunit protein uL18 from Tolumonas auensis (strain DSM 9187 / NBRC 110442 / TA 4).